Reading from the N-terminus, the 296-residue chain is ATP synthase gamma chain (296 aa).

The protein belongs to the ATPase gamma chain family. F-type ATPases have 2 components, CF(1) - the catalytic core - and CF(0) - the membrane proton channel. CF(1) has five subunits: alpha(3), beta(3), gamma(1), delta(1), epsilon(1). CF(0) has three main subunits: a, b and c.

The protein resides in the cell inner membrane. Functionally, produces ATP from ADP in the presence of a proton gradient across the membrane. The gamma chain is believed to be important in regulating ATPase activity and the flow of protons through the CF(0) complex. The polypeptide is ATP synthase gamma chain (Methylorubrum extorquens (strain PA1) (Methylobacterium extorquens)).